The sequence spans 102 residues: Small ribosomal subunit protein uS10 (102 aa).

The protein belongs to the universal ribosomal protein uS10 family. Part of the 30S ribosomal subunit.

In terms of biological role, involved in the binding of tRNA to the ribosomes. The chain is Small ribosomal subunit protein uS10 from Staphylococcus haemolyticus (strain JCSC1435).